Here is a 445-residue protein sequence, read N- to C-terminus: MVRNLEDFCNEANAKHIRIEDRERYTGHFNALKDMVYSYWKKSKGLDKLVKGTTLCGGYGDNLKVSKPDEYDLLIHLVFPENDKIIVKADASNPGNVLLDMTKVMEIIAKQEHNKPVFDLLQKIVNNKKQLLEDKLQSFLHGIMTQTLNKMGNRIEVQGEISHLSYKKCGPAHNILVKGPCEYSVDFVPAIKLSAAQLVLAPEQRKHFGGTLYWDAVPKPMKPAKPDNPSFRTSFYEAERSLLHGKQNLKSAIRMIKHIRNEKNKANLKSYHIKTVFLWQVMEKDASYWEKPKKEILIEMLGKLADLLALTPRKGRLPYFWDPKLDMFADLTDDQRTDMFNCFRKCEYVFRKADGNLNDDNENSVHSSFKGSGRNGQKMEKTSTESEQKKPTETKPNAKVESTPVKPNPKPSVQEKQAKPNLADQKKCTKNANGTKSKTTTPKPS.

Glu-70, Asp-72, and Asp-186 together coordinate Mg(2+). 70–72 (EYD) contributes to the ATP binding site. GTP is bound by residues Asp-186 and 232-239 (RTSFYEAE). Residues 236–239 (YEAE), Lys-257, and 270–274 (SYHIK) each bind ATP. Residues 357–445 (LNDDNENSVH…KSKTTTPKPS (89 aa)) form a disordered region. Residues 377–398 (QKMEKTSTESEQKKPTETKPNA) are compositionally biased toward basic and acidic residues. The span at 435–445 (TKSKTTTPKPS) shows a compositional bias: low complexity.

This sequence belongs to the mab-21 family. Mg(2+) serves as cofactor. Requires Mn(2+) as cofactor.

The enzyme catalyses GTP + ATP = 3',2'-cGAMP + 2 diphosphate. It carries out the reaction GTP + ATP = pppA(2'-5')pG + diphosphate. It catalyses the reaction pppA(2'-5')pG = 3',2'-cGAMP + diphosphate. Its activity is regulated as follows. The enzyme activity is specifically activated by double-stranded RNA (dsRNA). In terms of biological role, nucleotidyltransferase that catalyzes the formation of cyclic GMP-AMP (3',2'-cGAMP) from ATP and GTP and plays a key role in innate immunity. Synthesizes 3',2'-cGAMP in a two-step reaction through production of the linear intermediate pppA(2'-5')pG. Acts as a key sensor of double-stranded RNA (dsRNA), the presence of dsRNA in the cytoplasm being a danger signal that triggers the immune responses. Directly binds dsRNA, activating the nucleotidyltransferase activity, leading to synthesis of 3',2'-cGAMP, a second messenger that binds to and activates Sting, thereby triggering the antiviral immune response via activation of the NF-kappa-B transcription factor Rel (Relish). The protein is Cyclic GMP-AMP synthase-like receptor 1 of Drosophila erecta (Fruit fly).